A 143-amino-acid polypeptide reads, in one-letter code: Hypoxic response protein 1 (143 aa).

CBS domains are found at residues methionine 8–proline 65 and leucine 73–phenylalanine 131. The cysteines at positions 14 and 39 are disulfide-linked. Zn(2+) is bound by residues histidine 97 and histidine 122.

As to quaternary structure, homodimer.

Its subcellular location is the secreted. Unlike some other CBS-domain containing proteins does not seem to bind AMP. The sequence is that of Hypoxic response protein 1 (hrp1) from Mycobacterium tuberculosis (strain CDC 1551 / Oshkosh).